Reading from the N-terminus, the 370-residue chain is tRNA-specific 2-thiouridylase MnmA (370 aa).

Residues 7 to 14 (GISGGVDS) and Met33 contribute to the ATP site. The interval 104 to 106 (NPD) is interaction with target base in tRNA. Cys109 (nucleophile) is an active-site residue. A disulfide bridge connects residues Cys109 and Cys208. Gly134 serves as a coordination point for ATP. Residues 158-160 (KDQ) form an interaction with tRNA region. The Cysteine persulfide intermediate role is filled by Cys208.

It belongs to the MnmA/TRMU family.

It is found in the cytoplasm. It catalyses the reaction S-sulfanyl-L-cysteinyl-[protein] + uridine(34) in tRNA + AH2 + ATP = 2-thiouridine(34) in tRNA + L-cysteinyl-[protein] + A + AMP + diphosphate + H(+). Functionally, catalyzes the 2-thiolation of uridine at the wobble position (U34) of tRNA, leading to the formation of s(2)U34. The protein is tRNA-specific 2-thiouridylase MnmA of Malacoplasma penetrans (strain HF-2) (Mycoplasma penetrans).